The sequence spans 100 residues: NADH-quinone oxidoreductase subunit K (100 aa).

A run of 3 helical transmembrane segments spans residues 4-24 (LSHA…AIIV), 29-49 (LFIL…FVIV), and 60-80 (IMYI…LALL).

The protein belongs to the complex I subunit 4L family. In terms of assembly, NDH-1 is composed of 13 different subunits. Subunits NuoA, H, J, K, L, M, N constitute the membrane sector of the complex.

The protein localises to the cell inner membrane. The catalysed reaction is a quinone + NADH + 5 H(+)(in) = a quinol + NAD(+) + 4 H(+)(out). In terms of biological role, NDH-1 shuttles electrons from NADH, via FMN and iron-sulfur (Fe-S) centers, to quinones in the respiratory chain. The immediate electron acceptor for the enzyme in this species is believed to be ubiquinone. Couples the redox reaction to proton translocation (for every two electrons transferred, four hydrogen ions are translocated across the cytoplasmic membrane), and thus conserves the redox energy in a proton gradient. The protein is NADH-quinone oxidoreductase subunit K of Blochmanniella pennsylvanica (strain BPEN).